Reading from the N-terminus, the 468-residue chain is MSKTLYEKLFDAHVVHEANGETPLIYINRHLVHEVTSPQAFDGLRAMGRSVRQPSKTVATMDHNVPTDSRDLAGSGEMGRVQMVELAKNTEQFGITLYDINHINQGIVHVMGPEQGLTLPGMTIVCGDSHTATHGAFGALAFGIGTSEVEHVLATQTIKQARAKKMKIEVRGKVRDGISAKDIVLAIIGKTTMGGGTGHVVEFCGEAIRDLSMEGRMTVCNMAIELGAKSGIIAPDETTFAYLKDKPYAPKGKDWDEAVAYWQTLHSDEGAEFDTVVTLEASEIEPQVTWGTNPGQVIGINQPIPNPAEMSDPIERQSAEKALAYMDLPHSIKLTDVAIDKVFIGSCTNSRIEDLRAAAAIAKGRKVADGVQALVVPGSGLVREQAEKEGLDKIFIEAGFEWRLPGCSMCLAMNNDRLAPGERCASTSNRNFEGRQGRGGRTHLVSPAMAAAAAVYGKFVDIRNLELH.

The segment at 53-74 (QPSKTVATMDHNVPTDSRDLAG) is disordered. Cys347, Cys407, and Cys410 together coordinate [4Fe-4S] cluster.

The protein belongs to the aconitase/IPM isomerase family. LeuC type 1 subfamily. As to quaternary structure, heterodimer of LeuC and LeuD. [4Fe-4S] cluster is required as a cofactor.

It carries out the reaction (2R,3S)-3-isopropylmalate = (2S)-2-isopropylmalate. It functions in the pathway amino-acid biosynthesis; L-leucine biosynthesis; L-leucine from 3-methyl-2-oxobutanoate: step 2/4. Catalyzes the isomerization between 2-isopropylmalate and 3-isopropylmalate, via the formation of 2-isopropylmaleate. The polypeptide is 3-isopropylmalate dehydratase large subunit (Pasteurella multocida (strain Pm70)).